The sequence spans 413 residues: Multifunctional CCA protein (413 aa).

Positions 8 and 11 each coordinate ATP. Residues glycine 8 and arginine 11 each coordinate CTP. Aspartate 21 and aspartate 23 together coordinate Mg(2+). Residues arginine 91, arginine 137, and arginine 140 each coordinate ATP. CTP-binding residues include arginine 91, arginine 137, and arginine 140. In terms of domain architecture, HD spans 228–329 (TGLHTLMTVT…VKLFDSIDAW (102 aa)).

Belongs to the tRNA nucleotidyltransferase/poly(A) polymerase family. Bacterial CCA-adding enzyme type 1 subfamily. In terms of assembly, monomer. Can also form homodimers and oligomers. Mg(2+) serves as cofactor. Ni(2+) is required as a cofactor.

It catalyses the reaction a tRNA precursor + 2 CTP + ATP = a tRNA with a 3' CCA end + 3 diphosphate. The enzyme catalyses a tRNA with a 3' CCA end + 2 CTP + ATP = a tRNA with a 3' CCACCA end + 3 diphosphate. Functionally, catalyzes the addition and repair of the essential 3'-terminal CCA sequence in tRNAs without using a nucleic acid template. Adds these three nucleotides in the order of C, C, and A to the tRNA nucleotide-73, using CTP and ATP as substrates and producing inorganic pyrophosphate. tRNA 3'-terminal CCA addition is required both for tRNA processing and repair. Also involved in tRNA surveillance by mediating tandem CCA addition to generate a CCACCA at the 3' terminus of unstable tRNAs. While stable tRNAs receive only 3'-terminal CCA, unstable tRNAs are marked with CCACCA and rapidly degraded. The sequence is that of Multifunctional CCA protein from Klebsiella pneumoniae (strain 342).